The sequence spans 262 residues: Carbohydrate deacetylase (262 aa).

Residue histidine 129 coordinates Mg(2+).

This sequence belongs to the YdjC deacetylase family. In terms of assembly, homodimer. It depends on Mg(2+) as a cofactor.

Probably catalyzes the deacetylation of acetylated carbohydrates an important step in the degradation of oligosaccharides. The polypeptide is Carbohydrate deacetylase (Enterococcus faecalis (strain ATCC 700802 / V583)).